Consider the following 77-residue polypeptide: U10-lycotoxin-Ls1a (77 aa).

The N-terminal stretch at 1 to 20 (MKLIIFTGLVLFAIVSLIEA) is a signal peptide. Positions 21-26 (EEESGR) are excised as a propeptide.

It belongs to the neurotoxin 19 (CSTX) family. 09 (U10-Lctx) subfamily. Post-translationally, contains 4 disulfide bonds. In terms of tissue distribution, expressed by the venom gland.

It is found in the secreted. The protein is U10-lycotoxin-Ls1a of Lycosa singoriensis (Wolf spider).